The following is a 319-amino-acid chain: Ornithine carbamoyltransferase (319 aa).

Carbamoyl phosphate contacts are provided by residues 57–60 (STRT), Gln-84, Arg-108, and 135–138 (HPCQ). L-ornithine-binding positions include Asn-166, Asp-230, and 234–235 (SM). Carbamoyl phosphate contacts are provided by residues 270–271 (CL) and Arg-298.

The protein belongs to the aspartate/ornithine carbamoyltransferase superfamily. OTCase family.

It is found in the cytoplasm. It catalyses the reaction carbamoyl phosphate + L-ornithine = L-citrulline + phosphate + H(+). The protein operates within amino-acid biosynthesis; L-arginine biosynthesis; L-arginine from L-ornithine and carbamoyl phosphate: step 1/3. Reversibly catalyzes the transfer of the carbamoyl group from carbamoyl phosphate (CP) to the N(epsilon) atom of ornithine (ORN) to produce L-citrulline. The protein is Ornithine carbamoyltransferase (argF) of Bacillus subtilis (strain 168).